A 283-amino-acid polypeptide reads, in one-letter code: Protease HtpX (283 aa).

Transmembrane regions (helical) follow at residues 4–24 (ILLF…ILSV) and 33–53 (GGIL…SLFL). His-139 lines the Zn(2+) pocket. The active site involves Glu-140. His-143 is a Zn(2+) binding site. 2 consecutive transmembrane segments (helical) span residues 147–167 (GDMV…IFLS) and 190–210 (IYFL…SIIA). Glu-218 is a binding site for Zn(2+).

This sequence belongs to the peptidase M48B family. Requires Zn(2+) as cofactor.

The protein localises to the cell inner membrane. This chain is Protease HtpX, found in Haemophilus influenzae (strain PittGG).